Consider the following 98-residue polypeptide: Large ribosomal subunit protein uL23 (98 aa).

The protein belongs to the universal ribosomal protein uL23 family. Part of the 50S ribosomal subunit. Contacts protein L29, and trigger factor when it is bound to the ribosome.

Functionally, one of the early assembly proteins it binds 23S rRNA. One of the proteins that surrounds the polypeptide exit tunnel on the outside of the ribosome. Forms the main docking site for trigger factor binding to the ribosome. The sequence is that of Large ribosomal subunit protein uL23 from Methylorubrum populi (strain ATCC BAA-705 / NCIMB 13946 / BJ001) (Methylobacterium populi).